A 526-amino-acid chain; its full sequence is Chaperonin GroEL 2 (526 aa).

ATP contacts are provided by K50, G413, and D494.

The protein belongs to the chaperonin (HSP60) family. In terms of assembly, forms a cylinder of 14 subunits composed of two heptameric rings stacked back-to-back. Interacts with the co-chaperonin GroES.

The protein resides in the cytoplasm. It catalyses the reaction ATP + H2O + a folded polypeptide = ADP + phosphate + an unfolded polypeptide.. Functionally, together with its co-chaperonin GroES, plays an essential role in assisting protein folding. The GroEL-GroES system forms a nano-cage that allows encapsulation of the non-native substrate proteins and provides a physical environment optimized to promote and accelerate protein folding. The chain is Chaperonin GroEL 2 from Chlamydia pneumoniae (Chlamydophila pneumoniae).